The following is a 528-amino-acid chain: Phosphoenolpyruvate carboxykinase (ATP) (528 aa).

Substrate-binding residues include arginine 56, tyrosine 192, and lysine 198. Residues lysine 198, histidine 217, and 233-241 (GLSGTGKTT) each bind ATP. 2 residues coordinate Mn(2+): lysine 198 and histidine 217. Aspartate 254 serves as a coordination point for Mn(2+). Residues glutamate 282, arginine 319, and threonine 444 each contribute to the ATP site. Arginine 319 serves as a coordination point for substrate.

The protein belongs to the phosphoenolpyruvate carboxykinase (ATP) family. Mn(2+) serves as cofactor.

The protein resides in the cytoplasm. It carries out the reaction oxaloacetate + ATP = phosphoenolpyruvate + ADP + CO2. Its pathway is carbohydrate biosynthesis; gluconeogenesis. Its function is as follows. Involved in the gluconeogenesis. Catalyzes the conversion of oxaloacetate (OAA) to phosphoenolpyruvate (PEP) through direct phosphoryl transfer between the nucleoside triphosphate and OAA. The protein is Phosphoenolpyruvate carboxykinase (ATP) of Lysinibacillus sphaericus (strain C3-41).